A 156-amino-acid chain; its full sequence is Cyanate hydratase (156 aa).

Residues Arg96, Glu99, and Ser122 contribute to the active site.

Belongs to the cyanase family.

It carries out the reaction cyanate + hydrogencarbonate + 3 H(+) = NH4(+) + 2 CO2. Catalyzes the reaction of cyanate with bicarbonate to produce ammonia and carbon dioxide. The protein is Cyanate hydratase of Burkholderia orbicola (strain MC0-3).